Consider the following 103-residue polypeptide: Large ribosomal subunit protein bL21 (103 aa).

Belongs to the bacterial ribosomal protein bL21 family. Part of the 50S ribosomal subunit. Contacts protein L20.

In terms of biological role, this protein binds to 23S rRNA in the presence of protein L20. This chain is Large ribosomal subunit protein bL21, found in Beijerinckia indica subsp. indica (strain ATCC 9039 / DSM 1715 / NCIMB 8712).